A 193-amino-acid chain; its full sequence is Fe/S biogenesis protein NfuA (193 aa).

[4Fe-4S] cluster-binding residues include Cys-149 and Cys-152.

The protein belongs to the NfuA family. Homodimer. The cofactor is [4Fe-4S] cluster.

Involved in iron-sulfur cluster biogenesis. Binds a 4Fe-4S cluster, can transfer this cluster to apoproteins, and thereby intervenes in the maturation of Fe/S proteins. Could also act as a scaffold/chaperone for damaged Fe/S proteins. The protein is Fe/S biogenesis protein NfuA of Psychromonas ingrahamii (strain DSM 17664 / CCUG 51855 / 37).